Consider the following 334-residue polypeptide: ADP-L-glycero-D-manno-heptose-6-epimerase (334 aa).

Residues 11 to 12 (FI), 32 to 33 (DN), Lys39, Lys54, 77 to 81 (QGACS), and Asn94 each bind NADP(+). Tyr141 (proton acceptor) is an active-site residue. Lys145 contributes to the NADP(+) binding site. Asn171 serves as a coordination point for substrate. Residues Val172 and Lys180 each coordinate NADP(+). Lys180 serves as the catalytic Proton acceptor. Residues Arg182, His189, 203–206 (FGSN), Arg216, and Tyr295 each bind substrate.

The protein belongs to the NAD(P)-dependent epimerase/dehydratase family. HldD subfamily. Homopentamer. Requires NADP(+) as cofactor.

It carries out the reaction ADP-D-glycero-beta-D-manno-heptose = ADP-L-glycero-beta-D-manno-heptose. Its pathway is nucleotide-sugar biosynthesis; ADP-L-glycero-beta-D-manno-heptose biosynthesis; ADP-L-glycero-beta-D-manno-heptose from D-glycero-beta-D-manno-heptose 7-phosphate: step 4/4. Its function is as follows. Catalyzes the interconversion between ADP-D-glycero-beta-D-manno-heptose and ADP-L-glycero-beta-D-manno-heptose via an epimerization at carbon 6 of the heptose. The protein is ADP-L-glycero-D-manno-heptose-6-epimerase of Neisseria gonorrhoeae (strain ATCC 700825 / FA 1090).